The chain runs to 553 residues: Putative transport protein CKO_00031 (553 aa).

The next 5 helical transmembrane spans lie at 4–24, 28–48, 65–85, 95–115, and 158–178; these read IALT…IGNI, GVGF…HFVD, FGLI…FFAS, LFAI…HKIF, and MSYA…MWLM. RCK C-terminal domains are found at residues 192–276 and 279–361; these read QHED…VIGQ and DTSL…VVGN. The next 6 helical transmembrane spans lie at 371–391, 393–413, 437–457, 464–484, 493–513, and 533–553; these read MLPV…PLFV, GFPV…ALIL, LGIV…FIDT, LSWI…VGLL, YLTL…LAFA, and LVMF…WGLG.

Belongs to the AAE transporter (TC 2.A.81) family. YidE subfamily.

The protein resides in the cell membrane. The chain is Putative transport protein CKO_00031 from Citrobacter koseri (strain ATCC BAA-895 / CDC 4225-83 / SGSC4696).